Here is a 136-residue protein sequence, read N- to C-terminus: Histone H3.3C (136 aa).

The segment at 1-44 (MARTKQTARKSTGGKAPRKQLVTKAARKSAPSTGGMKKPHRYRP) is disordered. Residue Arg-3 is modified to Asymmetric dimethylarginine; by PRMT6; alternate. Arg-3 is modified (citrulline; alternate). Residue Thr-4 is modified to Phosphothreonine; by HASPIN. Position 5 is an allysine; alternate (Lys-5). Lys-5 bears the N6,N6,N6-trimethyllysine; alternate mark. An N6,N6-dimethyllysine; alternate modification is found at Lys-5. The residue at position 5 (Lys-5) is an N6-(2-hydroxyisobutyryl)lysine; alternate. Lys-5 carries the N6-(beta-hydroxybutyryl)lysine; alternate modification. Lys-5 is modified (N6-acetyllysine; alternate). Lys-5 carries the N6-methyllysine; alternate modification. 5-glutamyl dopamine; alternate is present on Gln-6. Gln-6 is subject to 5-glutamyl serotonin; alternate. Position 7 is a phosphothreonine; by PKC (Thr-7). Arg-9 is modified (symmetric dimethylarginine). Lys-10 bears the N6,N6,N6-trimethyllysine; alternate mark. Lys-10 bears the N6,N6-dimethyllysine; alternate mark. Lys-10 bears the N6-(2-hydroxyisobutyryl)lysine; alternate mark. N6-(beta-hydroxybutyryl)lysine; alternate is present on Lys-10. The residue at position 10 (Lys-10) is an N6-acetyllysine; alternate. Residue Lys-10 is modified to N6-methyllysine; alternate. Lys-10 bears the N6-lactoyllysine; alternate mark. Ser-11 carries the post-translational modification ADP-ribosylserine; alternate. Ser-11 is modified (phosphoserine; alternate; by AURKB, AURKC, RPS6KA3, RPS6KA4 and RPS6KA5). At Thr-12 the chain carries Phosphothreonine; by PKC. Lys-15 is subject to N6-(2-hydroxyisobutyryl)lysine; alternate. At Lys-15 the chain carries N6-(beta-hydroxybutyryl)lysine; alternate. Residue Lys-15 is modified to N6-acetyllysine; alternate. Lys-15 is subject to N6-lactoyllysine; alternate. N6-glutaryllysine; alternate is present on Lys-15. An N6-succinyllysine; alternate modification is found at Lys-15. At Arg-18 the chain carries Asymmetric dimethylarginine. 2 positions are modified to N6-(2-hydroxyisobutyryl)lysine; alternate: Lys-19 and Lys-24. Lys-19 and Lys-24 each carry N6-(beta-hydroxybutyryl)lysine; alternate. N6-acetyllysine; alternate occurs at positions 19 and 24. N6-methyllysine; alternate occurs at positions 19 and 24. N6-lactoyllysine; alternate occurs at positions 19 and 24. Residues Lys-19 and Lys-24 each carry the N6-glutaryllysine; alternate modification. N6-butyryllysine; alternate is present on residues Lys-19 and Lys-24. The residue at position 27 (Arg-27) is a Citrulline. Lys-28 bears the N6,N6,N6-trimethyllysine; alternate mark. Lys-28 carries the post-translational modification N6,N6-dimethyllysine; alternate. An N6-(2-hydroxyisobutyryl)lysine; alternate modification is found at Lys-28. The residue at position 28 (Lys-28) is an N6-acetyllysine; alternate. Residue Lys-28 is modified to N6-methyllysine; alternate. At Lys-28 the chain carries N6-lactoyllysine; alternate. Lys-28 bears the N6-glutaryllysine; alternate mark. ADP-ribosylserine; alternate is present on Ser-29. The residue at position 29 (Ser-29) is a Phosphoserine; alternate; by AURKB, AURKC and RPS6KA5. Position 32 is a phosphoserine (Ser-32). Lys-37 carries the N6,N6,N6-trimethyllysine; alternate modification. Position 37 is an N6,N6-dimethyllysine; alternate (Lys-37). Lys-37 bears the N6-(2-hydroxyisobutyryl)lysine; alternate mark. Lys-37 bears the N6-acetyllysine; alternate mark. Lys-37 carries the post-translational modification N6-methyllysine; alternate. An N6-methyllysine modification is found at Lys-38. A Phosphotyrosine modification is found at Tyr-42. An N6,N6,N6-trimethyllysine; alternate modification is found at Lys-57. An N6-(2-hydroxyisobutyryl)lysine; alternate modification is found at Lys-57. Lys-57 carries the N6-(beta-hydroxybutyryl)lysine; alternate modification. N6-acetyllysine; alternate is present on Lys-57. At Lys-57 the chain carries N6-methyllysine; alternate. Lys-57 is subject to N6-lactoyllysine; alternate. Lys-57 is subject to N6-glutaryllysine; alternate. Position 57 is an N6-succinyllysine; alternate (Lys-57). Position 58 is a phosphoserine (Ser-58). N6-(2-hydroxyisobutyryl)lysine; alternate is present on residues Lys-65 and Lys-80. 2 positions are modified to N6-methyllysine; alternate: Lys-65 and Lys-80. Lys-80 is modified (N6,N6,N6-trimethyllysine; alternate). Lys-80 carries the post-translational modification N6,N6-dimethyllysine; alternate. Position 80 is an N6-acetyllysine; alternate (Lys-80). Lys-80 carries the post-translational modification N6-lactoyllysine; alternate. Position 80 is an N6-glutaryllysine; alternate (Lys-80). Lys-80 carries the N6-succinyllysine; alternate modification. Thr-81 is subject to Phosphothreonine. Ser-87 carries the phosphoserine modification. Thr-108 is modified (phosphothreonine). N6-acetyllysine; alternate is present on Lys-116. Lys-116 is modified (N6-glutaryllysine; alternate).

It belongs to the histone H3 family. In terms of assembly, the nucleosome is a histone octamer containing two molecules each of H2A, H2B, H3 and H4 assembled in one H3-H4 heterotetramer and two H2A-H2B heterodimers. The octamer wraps approximately 147 bp of DNA. Post-translationally, acetylation is generally linked to gene activation. Acetylation on Lys-19 (H3K18ac) favors methylation at Arg-18 (H3R17me). Citrullination at Arg-18 by PADI4 impairs methylation and represses transcription. In terms of processing, asymmetric dimethylation at Arg-18 (H3R17me2a) by CARM1 is linked to gene activation. Asymmetric dimethylation at Arg-3 (H3R2me2a) by PRMT6 is linked to gene repression and is mutually exclusive with H3 Lys-5 methylation (H3K4me2 and H3K4me3). H3R2me2a is present at the 3' of genes regardless of their transcription state and is enriched on inactive promoters, while it is absent on active promoters. Post-translationally, methylation at Lys-5 (H3K4me) and Lys-80 (H3K79me) are linked to gene activation. Methylation at Lys-5 (H3K4me) facilitates subsequent acetylation of H3 and H4. Methylation at Lys-80 (H3K79me) is associated with DNA double-strand break (DSB) responses and is a specific target for TP53BP1. Methylation at Lys-10 (H3K9me) and Lys-28 (H3K27me) are linked to gene repression. Methylation at Lys-10 (H3K9me) is a specific target for HP1 proteins (CBX1, CBX3 and CBX5) and prevents subsequent phosphorylation at Ser-11 (H3S10ph) and acetylation of H3 and H4. Methylation at Lys-5 (H3K4me) and Lys-80 (H3K79me) require preliminary monoubiquitination of H2B at 'Lys-120'. Methylation at Lys-10 (H3K9me) and Lys-28 (H3K27me) are enriched in inactive X chromosome chromatin. Monomethylation at Lys-57 (H3K56me1) by EHMT2/G9A in G1 phase promotes interaction with PCNA and is required for DNA replication. Phosphorylated at Thr-4 (H3T3ph) by HASPIN during prophase and dephosphorylated during anaphase. Phosphorylation at Ser-11 (H3S10ph) by AURKB is crucial for chromosome condensation and cell-cycle progression during mitosis and meiosis. In addition phosphorylation at Ser-11 (H3S10ph) by RPS6KA4 and RPS6KA5 is important during interphase because it enables the transcription of genes following external stimulation, like mitogens, stress, growth factors or UV irradiation and result in the activation of genes, such as c-fos and c-jun. Phosphorylation at Ser-11 (H3S10ph), which is linked to gene activation, prevents methylation at Lys-10 (H3K9me) but facilitates acetylation of H3 and H4. Phosphorylation at Ser-11 (H3S10ph) by AURKB mediates the dissociation of HP1 proteins (CBX1, CBX3 and CBX5) from heterochromatin. Phosphorylation at Ser-11 (H3S10ph) is also an essential regulatory mechanism for neoplastic cell transformation. Phosphorylated at Ser-29 (H3S28ph) by MAP3K20 isoform 1, RPS6KA5 or AURKB during mitosis or upon ultraviolet B irradiation. Phosphorylation at Thr-7 (H3T6ph) by PRKCB is a specific tag for epigenetic transcriptional activation that prevents demethylation of Lys-5 (H3K4me) by LSD1/KDM1A. At centromeres, specifically phosphorylated at Thr-12 (H3T11ph) from prophase to early anaphase, by DAPK3 and PKN1. Phosphorylation at Thr-12 (H3T11ph) by PKN1 or isoform M2 of PKM (PKM2) is a specific tag for epigenetic transcriptional activation that promotes demethylation of Lys-10 (H3K9me) by KDM4C/JMJD2C. Phosphorylation at Tyr-42 (H3Y41ph) by JAK2 promotes exclusion of CBX5 (HP1 alpha) from chromatin. In terms of processing, lysine deamination at Lys-5 (H3K4all) to form allysine is mediated by LOXL2. Allysine formation by LOXL2 only takes place on H3K4me3 and results in gene repression. Post-translationally, butyrylation of histones marks active promoters and competes with histone acetylation. It is present during late spermatogenesis. Succinylation at Lys-80 (H3K79succ) by KAT2A takes place with a maximum frequency around the transcription start sites of genes. It gives a specific tag for epigenetic transcription activation. In terms of processing, serine ADP-ribosylation constitutes the primary form of ADP-ribosylation of proteins in response to DNA damage. Serine ADP-ribosylation at Ser-11 (H3S10ADPr) is mutually exclusive with phosphorylation at Ser-11 (H3S10ph) and impairs acetylation at Lys-10 (H3K9ac).

The protein localises to the nucleus. It is found in the chromosome. Its function is as follows. Core component of nucleosome. Nucleosomes wrap and compact DNA into chromatin, limiting DNA accessibility to the cellular machineries which require DNA as a template. Histones thereby play a central role in transcription regulation, DNA repair, DNA replication and chromosomal stability. DNA accessibility is regulated via a complex set of post-translational modifications of histones, also called histone code, and nucleosome remodeling. The polypeptide is Histone H3.3C (Bos taurus (Bovine)).